We begin with the raw amino-acid sequence, 306 residues long: Putative S-adenosyl-L-methionine-dependent methyltransferase MAV_4442 (306 aa).

Residues Asp129 and 158–159 (DL) contribute to the S-adenosyl-L-methionine site.

Belongs to the UPF0677 family.

Its function is as follows. Exhibits S-adenosyl-L-methionine-dependent methyltransferase activity. The polypeptide is Putative S-adenosyl-L-methionine-dependent methyltransferase MAV_4442 (Mycobacterium avium (strain 104)).